Consider the following 320-residue polypeptide: tRNA dimethylallyltransferase (320 aa).

ATP is bound at residue 10–17 (GPTASGKT). Residue 12 to 17 (TASGKT) participates in substrate binding. Interaction with substrate tRNA regions lie at residues 35–38 (DSAL), 159–163 (QRIQR), and 241–246 (RCVGYR).

It belongs to the IPP transferase family. Monomer. It depends on Mg(2+) as a cofactor.

The enzyme catalyses adenosine(37) in tRNA + dimethylallyl diphosphate = N(6)-dimethylallyladenosine(37) in tRNA + diphosphate. Catalyzes the transfer of a dimethylallyl group onto the adenine at position 37 in tRNAs that read codons beginning with uridine, leading to the formation of N6-(dimethylallyl)adenosine (i(6)A). The protein is tRNA dimethylallyltransferase of Aromatoleum aromaticum (strain DSM 19018 / LMG 30748 / EbN1) (Azoarcus sp. (strain EbN1)).